The following is a 567-amino-acid chain: Proline--tRNA ligase (567 aa).

This sequence belongs to the class-II aminoacyl-tRNA synthetase family. ProS type 1 subfamily. In terms of assembly, homodimer.

It localises to the cytoplasm. It catalyses the reaction tRNA(Pro) + L-proline + ATP = L-prolyl-tRNA(Pro) + AMP + diphosphate. Functionally, catalyzes the attachment of proline to tRNA(Pro) in a two-step reaction: proline is first activated by ATP to form Pro-AMP and then transferred to the acceptor end of tRNA(Pro). As ProRS can inadvertently accommodate and process non-cognate amino acids such as alanine and cysteine, to avoid such errors it has two additional distinct editing activities against alanine. One activity is designated as 'pretransfer' editing and involves the tRNA(Pro)-independent hydrolysis of activated Ala-AMP. The other activity is designated 'posttransfer' editing and involves deacylation of mischarged Ala-tRNA(Pro). The misacylated Cys-tRNA(Pro) is not edited by ProRS. The polypeptide is Proline--tRNA ligase (Geobacillus sp. (strain WCH70)).